Reading from the N-terminus, the 202-residue chain is Nascent polypeptide-associated complex subunit alpha (202 aa).

The span at 1-19 shows a compositional bias: basic and acidic residues; it reads MADPRVEELPDEEVPKTNV. A disordered region spans residues 1-42; sequence MADPRVEELPDEEVPKTNVEDAGSSSESEAGDEPTIPGGAAV. The region spanning 46-111 is the NAC-A/B domain; it reads SRNEKKARKA…AKIEDLNATA (66 aa). The segment covering 117–126 has biased composition (low complexity); sequence QQLAEAAANE. The disordered stretch occupies residues 117–165; sequence QQLAEAAANEHAGHDHEHDHGKGKAPEAEAKKEEEEDDGEEVDESGLEA. Residues 127–149 show a composition bias toward basic and acidic residues; sequence HAGHDHEHDHGKGKAPEAEAKKE. The segment covering 150–162 has biased composition (acidic residues); the sequence is EEEDDGEEVDESG. In terms of domain architecture, UBA spans 163–202; that stretch reads LEAKDIELVMAQANVSRKKAVKALRENDNDIVNSIMALSI.

This sequence belongs to the NAC-alpha family. As to quaternary structure, part of the nascent polypeptide-associated complex (NAC), consisting of egd2 and egd1. NAC associates with ribosomes via egd1.

Its subcellular location is the cytoplasm. The protein localises to the nucleus. Its function is as follows. Component of the nascent polypeptide-associated complex (NAC), a dynamic component of the ribosomal exit tunnel, protecting the emerging polypeptides from interaction with other cytoplasmic proteins to ensure appropriate nascent protein targeting. The NAC complex also promotes mitochondrial protein import by enhancing productive ribosome interactions with the outer mitochondrial membrane and blocks the inappropriate interaction of ribosomes translating non-secretory nascent polypeptides with translocation sites in the membrane of the endoplasmic reticulum. Egd2 may also be involved in transcription regulation. This Aspergillus niger (strain ATCC MYA-4892 / CBS 513.88 / FGSC A1513) protein is Nascent polypeptide-associated complex subunit alpha (egd2).